Here is a 348-residue protein sequence, read N- to C-terminus: F(420)H(2) dehydrogenase subunit H (348 aa).

8 consecutive transmembrane segments (helical) span residues 20–40, 93–113, 127–147, 172–192, 198–218, 259–279, 286–306, and 328–348; these read GVVG…AVWL, IFMM…AVFI, ISVL…FMIA, PLGI…IVEI, LLWN…ALMA, ILGS…PAFV, GLIA…MTII, and LLPL…YLGA.

The protein belongs to the complex I subunit 1 family. The FPO complex is composed of at least 13 different subunits. FpoA, FpoH, FpoJ, FpoK, FpoL, FpoM and FpoN proteins constitute the membrane sector of the complex.

It is found in the cell membrane. The enzyme catalyses methanophenazine + reduced coenzyme F420-(gamma-L-Glu)(n) = dihydromethanophenazine + oxidized coenzyme F420-(gamma-L-Glu)(n) + H(+). Its function is as follows. Component of the F(420)H(2) dehydrogenase (FPO complex) which is part of the energy-conserving F(420)H(2):heterodisulfide oxidoreductase system. The membrane-bound electron transfer system of the complex plays an important role in the metabolism of methylotrophic methanogens when the organisms grow on methanol or methylamines. Catalyzes the oxidation of methanophenazine to dihydromethanophenazine. It shuttles electrons from F(420)H(2), via FAD and iron-sulfur (Fe-S) centers, to methanophenazine (an electron carrier in the membrane). It couples the redox reaction to proton translocation (for every two electrons transferred, two hydrogen ions are translocated across the cytoplasmic membrane), and thus conserves the redox energy in a proton gradient. This chain is F(420)H(2) dehydrogenase subunit H, found in Methanosarcina acetivorans (strain ATCC 35395 / DSM 2834 / JCM 12185 / C2A).